A 520-amino-acid chain; its full sequence is Glucose-1-phosphate adenylyltransferase small subunit, chloroplastic (520 aa).

The N-terminal 71 residues, 1–71 (MASVSAIGVL…RNPIIVSPKA (71 aa)), are a transit peptide targeting the chloroplast.

The protein belongs to the bacterial/plant glucose-1-phosphate adenylyltransferase family. Heterotetramer. In terms of tissue distribution, leaves.

It localises to the plastid. The protein localises to the chloroplast. The enzyme catalyses alpha-D-glucose 1-phosphate + ATP + H(+) = ADP-alpha-D-glucose + diphosphate. Its pathway is glycan biosynthesis; starch biosynthesis. Its activity is regulated as follows. Activated by 3'phosphoglycerate, inhibited by orthophosphate. Allosteric regulation. Its function is as follows. This protein plays a role in synthesis of starch. It catalyzes the synthesis of the activated glycosyl donor, ADP-glucose from Glc-1-P and ATP. This is Glucose-1-phosphate adenylyltransferase small subunit, chloroplastic (APS1) from Arabidopsis thaliana (Mouse-ear cress).